We begin with the raw amino-acid sequence, 256 residues long: Ciliary microtubule associated protein 1A (256 aa).

STPGR repeat units lie at residues 66 to 92 (PGPG…IYGR), 181 to 206 (PGPG…MTAR), and 217 to 242 (PGPG…FGIR).

It belongs to the CIMAP family.

The protein resides in the cytoplasm. It localises to the cytoskeleton. Its subcellular location is the flagellum axoneme. Outer dense fibers are filamentous structures located on the outside of the axoneme in the midpiece and principal piece of the mammalian sperm tail. May help to maintain the passive elastic structures and elastic recoil of the sperm tail. This chain is Ciliary microtubule associated protein 1A (cimap1a), found in Xenopus tropicalis (Western clawed frog).